The sequence spans 283 residues: tRNA pseudouridine synthase B (283 aa).

The active-site Nucleophile is Asp38.

The protein belongs to the pseudouridine synthase TruB family. Type 1 subfamily.

It catalyses the reaction uridine(55) in tRNA = pseudouridine(55) in tRNA. Functionally, responsible for synthesis of pseudouridine from uracil-55 in the psi GC loop of transfer RNAs. The protein is tRNA pseudouridine synthase B of Aster yellows witches'-broom phytoplasma (strain AYWB).